An 855-amino-acid polypeptide reads, in one-letter code: MSDEKNLGVSQKLVSPSRSTSSCSSKQGSRQDSWEVVEGLRGEMTYTQEPPVQKGFLLKKRKWPLKGWHKRFFCLEKGILKYAKSQADIEREKLHGCIDVGLSVMSVKKSSKCIDLDTEEHIYHLKVKSEELFDEWVSKLRHHRMYRQNEIAMFPRDVNHFFSGSSVTDSAPGVFESVSSRKRSSLSKQNSFPPGSNLSFSCGGDTRVPFWLQSSEDMEKCSKDMAHCHAYLLEMSQLLESMDVLHRTYSAPAINAIQVPKPFSGPVRLHSSNPNLSTLDFGEEKSYSDGSEASSEFSKMQEDLCHVAHKVYFALRSAFNSISVEREKLKQLMELDTSPSPSAQVVGLKHALSSALAQNTDLKERLRRIHAESLLLDPPAVPKPGDNLAEENSRDEGRALVHQLSNESRLSITDSLSEFFDAQEVLLSPSSSENEISDDDSYVSDISDNLSLDNLSNDLDNERQTLGPVLESSGEARSKRRTSLPAPGPNTSSVSLWSILRNNIGKDLSKVAMPVELNEPLNTLQRLCEELEYSELLDKASRIPSPLERMVYVAAFAISAYASSYFRAGSKPFNPVLGETYECIRQDKGFQFFAEQVSHHPPISACHAESGNFVFWQDVRWKNKFWGKSMEIVPIGTTHVTLPAFGDHFEWNKVTSCIHNILSGQRWIEHYGEIDIKNLNDDSCHCKVNFIKAKYWSTNAHEIEGTVFDRSGKAVHRLFGKWHESIYCGGASSSTCVWRANPMPKGYEQYYGFTQFALELNEMDPLSRSLLPPTDTRFRPDQRLLEEGNIEEAEVQKQRIEKLQRERRRVLEENGVEHQPRFFRKSSDDAWVSNGTYLELRKDLGFSKLDHPVLW.

Positions 1–32 (MSDEKNLGVSQKLVSPSRSTSSCSSKQGSRQD) are disordered. 2 positions are modified to phosphoserine: Ser-15 and Ser-33. Residues 15 to 31 (SPSRSTSSCSSKQGSRQ) are compositionally biased toward low complexity. Positions 50–145 (PPVQKGFLLK…WVSKLRHHRM (96 aa)) constitute a PH domain. The FFAT 1 motif lies at 161-167 (FFSGSSV). Residues Ser-199, Ser-250, Ser-272, Ser-277, Ser-288, Ser-291, Ser-340, Ser-393, Ser-405, and Ser-408 each carry the phosphoserine modification. The interval 274–293 (PNLSTLDFGEEKSYSDGSEA) is disordered. A disordered region spans residues 377–396 (DPPAVPKPGDNLAEENSRDE). An FFAT 2 motif is present at residues 450–454 (LSLDN). The segment at 468–490 (PVLESSGEARSKRRTSLPAPGPN) is disordered.

It belongs to the OSBP family. In terms of assembly, homodimer. Interacts with RRAS. Interacts (phosphorylated form) with VAPA. Interacts with OSBPL6. Phosphorylation is enhanced in vitro by phorbol-12-myristate-13-acetate (PMA), forskolin and calcium ionophore A23187. Phosphorylation seems to be stimulated in conditions of low cell-cell (or cell-matrix) adhesion. In terms of tissue distribution, expressed in spinal ganglia. Expressed in a subset of small lymphocytes (at protein level).

It localises to the endoplasmic reticulum membrane. It is found in the cytoplasm. The protein resides in the cytosol. The protein localises to the cell membrane. Its subcellular location is the cell projection. It localises to the filopodium tip. It is found in the nucleus membrane. Its function is as follows. Phosphoinositide-binding protein which associates with both cell and endoplasmic reticulum (ER) membranes. Can bind to the ER membrane protein VAPA and recruit VAPA to plasma membrane sites, thus linking these intracellular compartments. The ORP3-VAPA complex stimulates RRAS signaling which in turn attenuates integrin beta-1 (ITGB1) activation at the cell surface. With VAPA, may regulate ER morphology. Has a role in regulation of the actin cytoskeleton, cell polarity and cell adhesion. Binds to phosphoinositides with preference for PI(3,4)P2 and PI(3,4,5)P3. Also binds 25-hydroxycholesterol and cholesterol. The sequence is that of Oxysterol-binding protein-related protein 3 (Osbpl3) from Mus musculus (Mouse).